The following is a 109-amino-acid chain: Large ribosomal subunit protein uL22 (109 aa).

The protein belongs to the universal ribosomal protein uL22 family. In terms of assembly, part of the 50S ribosomal subunit.

Functionally, this protein binds specifically to 23S rRNA; its binding is stimulated by other ribosomal proteins, e.g. L4, L17, and L20. It is important during the early stages of 50S assembly. It makes multiple contacts with different domains of the 23S rRNA in the assembled 50S subunit and ribosome. In terms of biological role, the globular domain of the protein is located near the polypeptide exit tunnel on the outside of the subunit, while an extended beta-hairpin is found that lines the wall of the exit tunnel in the center of the 70S ribosome. This chain is Large ribosomal subunit protein uL22, found in Ralstonia pickettii (strain 12J).